Here is a 429-residue protein sequence, read N- to C-terminus: Adenylosuccinate synthetase (429 aa).

GTP contacts are provided by residues 13–19 (GDEGKGK) and 41–43 (GHT). Catalysis depends on aspartate 14, which acts as the Proton acceptor. Mg(2+) contacts are provided by aspartate 14 and glycine 41. IMP contacts are provided by residues 14–17 (DEGK), 39–42 (NAGH), threonine 130, arginine 144, glutamine 225, threonine 240, and arginine 304. Catalysis depends on histidine 42, which acts as the Proton donor. Substrate is bound at residue 300–306 (ATTGRRR). Residues arginine 306, 332–334 (KLD), and 417–419 (STG) contribute to the GTP site.

Belongs to the adenylosuccinate synthetase family. In terms of assembly, homodimer. It depends on Mg(2+) as a cofactor.

The protein localises to the cytoplasm. The catalysed reaction is IMP + L-aspartate + GTP = N(6)-(1,2-dicarboxyethyl)-AMP + GDP + phosphate + 2 H(+). It functions in the pathway purine metabolism; AMP biosynthesis via de novo pathway; AMP from IMP: step 1/2. Its function is as follows. Plays an important role in the de novo pathway of purine nucleotide biosynthesis. Catalyzes the first committed step in the biosynthesis of AMP from IMP. This is Adenylosuccinate synthetase from Buchnera aphidicola subsp. Baizongia pistaciae (strain Bp).